The chain runs to 160 residues: CXXC motif containing zinc binding protein (160 aa).

4 residues coordinate Zn(2+): Cys-33, Cys-36, Cys-67, and Cys-70. A Phosphoserine modification is found at Ser-75.

The protein belongs to the UPF0587 family. In terms of assembly, monomer.

In Rattus norvegicus (Rat), this protein is CXXC motif containing zinc binding protein.